Reading from the N-terminus, the 752-residue chain is Xanthine dehydrogenase molybdenum-binding subunit (752 aa).

4 residues coordinate Mo-molybdopterin: glutamine 206, phenylalanine 237, arginine 350, and alanine 516.

The protein belongs to the xanthine dehydrogenase family. Heterotrimer of XdhA, XdhB and XdhC. Mo-molybdopterin is required as a cofactor.

It carries out the reaction xanthine + NAD(+) + H2O = urate + NADH + H(+). It catalyses the reaction hypoxanthine + NAD(+) + H2O = xanthine + NADH + H(+). It participates in purine metabolism; hypoxanthine degradation; urate from hypoxanthine: step 1/2. Its pathway is purine metabolism; hypoxanthine degradation; urate from hypoxanthine: step 2/2. In terms of biological role, presumed to be a dehydrogenase, but possibly an oxidase. Participates in limited purine salvage (requires aspartate) but does not support aerobic growth on purines as the sole carbon source (purine catabolism). The chain is Xanthine dehydrogenase molybdenum-binding subunit (xdhA) from Escherichia coli O157:H7.